Reading from the N-terminus, the 249-residue chain is Vitamin B12 import ATP-binding protein BtuD (249 aa).

Residues 1–233 enclose the ABC transporter domain; it reads MSIVMQLQDV…PNLAQAYGMN (233 aa). 33–40 lines the ATP pocket; that stretch reads GPNGAGKS.

Belongs to the ABC transporter superfamily. Vitamin B12 importer (TC 3.A.1.13.1) family. As to quaternary structure, the complex is composed of two ATP-binding proteins (BtuD), two transmembrane proteins (BtuC) and a solute-binding protein (BtuF).

The protein resides in the cell inner membrane. The enzyme catalyses an R-cob(III)alamin(out) + ATP + H2O = an R-cob(III)alamin(in) + ADP + phosphate + H(+). Its function is as follows. Part of the ABC transporter complex BtuCDF involved in vitamin B12 import. Responsible for energy coupling to the transport system. The chain is Vitamin B12 import ATP-binding protein BtuD from Escherichia coli (strain K12 / DH10B).